The primary structure comprises 872 residues: UPF0182 protein Noc_0961 (872 aa).

Helical transmembrane passes span 8–28 (FLILGLSIVVLAVFLLIAGFE), 56–76 (LVVFIQVSIVFFLIFFVNFWV), 109–129 (SLWIYTPLSLVLSIIIAWPLF), 159–179 (LFSFPIYVLILQRLLISFLLL), 207–227 (WHLSILVLMVFFIEIWDFFLQ), 254–274 (PFIWLSMFFLLGIAFFLLLFI), and 282–302 (TLAVFSLLFILSLGARHFHFL).

It belongs to the UPF0182 family.

It is found in the cell membrane. This Nitrosococcus oceani (strain ATCC 19707 / BCRC 17464 / JCM 30415 / NCIMB 11848 / C-107) protein is UPF0182 protein Noc_0961.